The primary structure comprises 273 residues: Large ribosomal subunit protein uL2 (273 aa).

Positions 221-263 are disordered; that stretch reads RGTAMNPVDHPHGGGEGRNFGKHPVSPWGLQTKGKKTRKNKRT. Positions 253–263 are enriched in basic residues; the sequence is KGKKTRKNKRT.

Belongs to the universal ribosomal protein uL2 family. As to quaternary structure, part of the 50S ribosomal subunit. Forms a bridge to the 30S subunit in the 70S ribosome.

One of the primary rRNA binding proteins. Required for association of the 30S and 50S subunits to form the 70S ribosome, for tRNA binding and peptide bond formation. It has been suggested to have peptidyltransferase activity; this is somewhat controversial. Makes several contacts with the 16S rRNA in the 70S ribosome. The chain is Large ribosomal subunit protein uL2 from Buchnera aphidicola subsp. Baizongia pistaciae (strain Bp).